Here is a 369-residue protein sequence, read N- to C-terminus: Serpentine receptor class epsilon-2 (369 aa).

Over 1 to 20 the chain is Extracellular; sequence MLIQYHKISNNDPNRIQLLS. Residues 21–41 traverse the membrane as a helical segment; it reads MIFCEIILLIFELFEFAAIIF. The Cytoplasmic portion of the chain corresponds to 42-55; the sequence is NMSRYQFHFNLKVV. Residues 56-76 traverse the membrane as a helical segment; sequence VGYAIFAYWFDIIARITIAFF. Residues 77-118 lie on the Extracellular side of the membrane; that stretch reads EIGLFNLDDQTIAVETEKLPWNYKNMFFMLLFCCSTYRVYFM. The helical transmembrane segment at 119–139 threads the bilayer; it reads FLICSVTLLLAVERFLATIWV. The Cytoplasmic segment spans residues 140 to 148; that stretch reads STYESVQHK. The chain crosses the membrane as a helical span at residues 149–169; sequence WVSIVLTSTNSIAGIFGSLLF. Topologically, residues 170-178 are extracellular; it reads HYELIFDTA. The helical transmembrane segment at 179–199 threads the bilayer; it reads VWCSLGLCFNFVSIFLYVILF. The Cytoplasmic portion of the chain corresponds to 200 to 234; that stretch reads NSNKSKIELCQTREITQSYTLSLRFQLNENLKIMN. A helical transmembrane segment spans residues 235-255; sequence WIKNSILVVTCFNTLLAGFLI. Residues 256–274 are Extracellular-facing; the sequence is ASNNEYLKNDYPVLVKCCH. Residues 275 to 295 form a helical membrane-spanning segment; the sequence is TFLNLGIAIYAQVVFFVAILA. Topologically, residues 296–369 are cytoplasmic; that stretch reads DRHFRTYFLR…VAKKKRFWRV (74 aa).

This sequence belongs to the nematode receptor-like protein sre family.

The protein localises to the cell membrane. This Caenorhabditis elegans protein is Serpentine receptor class epsilon-2 (sre-2).